A 157-amino-acid polypeptide reads, in one-letter code: NADPH-dependent 7-cyano-7-deazaguanine reductase (157 aa).

Catalysis depends on Cys55, which acts as the Thioimide intermediate. Catalysis depends on Asp62, which acts as the Proton donor. Substrate contacts are provided by residues 77–79 (VES) and 96–97 (HE).

Belongs to the GTP cyclohydrolase I family. QueF type 1 subfamily.

It is found in the cytoplasm. The catalysed reaction is 7-aminomethyl-7-carbaguanine + 2 NADP(+) = 7-cyano-7-deazaguanine + 2 NADPH + 3 H(+). It functions in the pathway tRNA modification; tRNA-queuosine biosynthesis. Functionally, catalyzes the NADPH-dependent reduction of 7-cyano-7-deazaguanine (preQ0) to 7-aminomethyl-7-deazaguanine (preQ1). The sequence is that of NADPH-dependent 7-cyano-7-deazaguanine reductase from Neisseria gonorrhoeae (strain ATCC 700825 / FA 1090).